We begin with the raw amino-acid sequence, 179 residues long: Ribulose bisphosphate carboxylase small subunit, chloroplastic 1/4 (179 aa).

The transit peptide at 1 to 58 directs the protein to the chloroplast; it reads MAASSTMLSSVATAACAAPAQASMVAPFVGLKSTSAFPVTQKPATGLSTLPSNGGRVQ.

It belongs to the RuBisCO small chain family. Heterohexadecamer of 8 large and 8 small subunits.

Its subcellular location is the plastid. The protein resides in the chloroplast. Its function is as follows. RuBisCO catalyzes two reactions: the carboxylation of D-ribulose 1,5-bisphosphate, the primary event in carbon dioxide fixation, as well as the oxidative fragmentation of the pentose substrate. Both reactions occur simultaneously and in competition at the same active site. Although the small subunit is not catalytic it is essential for maximal activity. The protein is Ribulose bisphosphate carboxylase small subunit, chloroplastic 1/4 (RBCS1) of Fritillaria agrestis (Stinkbells).